The following is a 249-amino-acid chain: DNA repair protein RecO (249 aa).

It belongs to the RecO family.

In terms of biological role, involved in DNA repair and RecF pathway recombination. The polypeptide is DNA repair protein RecO (Lactobacillus delbrueckii subsp. bulgaricus (strain ATCC 11842 / DSM 20081 / BCRC 10696 / JCM 1002 / NBRC 13953 / NCIMB 11778 / NCTC 12712 / WDCM 00102 / Lb 14)).